Here is a 352-residue protein sequence, read N- to C-terminus: Ion-translocating oxidoreductase complex subunit D (352 aa).

5 helical membrane-spanning segments follow: residues 20–40 (IMLL…WFFG), 42–62 (GTLV…ALVL), 78–109 (ALLT…VIIA), 123–143 (PAMI…TSWL), and 148–168 (IAVN…GHTA). Thr-187 carries the post-translational modification FMN phosphoryl threonine. 5 helical membrane-spanning segments follow: residues 214–234 (ILAG…GLWL), 242–262 (WHIP…GWLF), 267–287 (LAAP…FFIL), 301–321 (LIFG…GGYP), and 322–342 (DGVA…DYYT).

The protein belongs to the NqrB/RnfD family. The complex is composed of six subunits: RsxA, RsxB, RsxC, RsxD, RsxE and RsxG. Requires FMN as cofactor.

It is found in the cell inner membrane. Part of a membrane-bound complex that couples electron transfer with translocation of ions across the membrane. Required to maintain the reduced state of SoxR. This Escherichia coli (strain SE11) protein is Ion-translocating oxidoreductase complex subunit D.